Here is a 279-residue protein sequence, read N- to C-terminus: Phosphatidylglycerol--prolipoprotein diacylglyceryl transferase (279 aa).

Transmembrane regions (helical) follow at residues 25-45, 60-80, 103-123, 133-153, 181-201, 209-229, and 236-256; these read WYGL…KFFV, YFIW…ILIY, FVGI…IATI, LWSL…FGRI, PSQL…LYFY, GELI…TEFL, and IGYF…MLIL. Arg152 is an a 1,2-diacyl-sn-glycero-3-phospho-(1'-sn-glycerol) binding site.

Belongs to the Lgt family.

It is found in the cell inner membrane. It catalyses the reaction L-cysteinyl-[prolipoprotein] + a 1,2-diacyl-sn-glycero-3-phospho-(1'-sn-glycerol) = an S-1,2-diacyl-sn-glyceryl-L-cysteinyl-[prolipoprotein] + sn-glycerol 1-phosphate + H(+). It functions in the pathway protein modification; lipoprotein biosynthesis (diacylglyceryl transfer). Catalyzes the transfer of the diacylglyceryl group from phosphatidylglycerol to the sulfhydryl group of the N-terminal cysteine of a prolipoprotein, the first step in the formation of mature lipoproteins. This Campylobacter hominis (strain ATCC BAA-381 / DSM 21671 / CCUG 45161 / LMG 19568 / NCTC 13146 / CH001A) protein is Phosphatidylglycerol--prolipoprotein diacylglyceryl transferase.